The chain runs to 398 residues: Signal-regulatory protein beta-1 isoform 3 (398 aa).

The first 29 residues, Met-1–Gly-29, serve as a signal peptide directing secretion. At Glu-30–Leu-371 the chain is on the extracellular side. The 106-residue stretch at Glu-31–Gly-136 folds into the Ig-like V-type domain. 2 cysteine pairs are disulfide-bonded: Cys-54/Cys-120 and Cys-169/Cys-227. Ig-like C1-type domains lie at Pro-147–Ser-246 and Pro-253–Lys-347. Asn-244, Asn-291, and Asn-318 each carry an N-linked (GlcNAc...) asparagine glycan. A disulfide bridge links Cys-272 with Cys-330. Residues Gln-337–Glu-354 show a composition bias toward basic and acidic residues. Positions Gln-337 to Pro-361 are disordered. The helical transmembrane segment at Leu-372–Val-392 threads the bilayer. Residues Tyr-393 to Ala-398 are Cytoplasmic-facing.

It localises to the membrane. Functionally, immunoglobulin-like cell surface receptor involved in the negative regulation of receptor tyrosine kinase-coupled signaling processes. This Homo sapiens (Human) protein is Signal-regulatory protein beta-1 isoform 3 (SIRPB1).